The following is a 258-amino-acid chain: Glutamate racemase (258 aa).

Residues 12-13 and 44-45 contribute to the substrate site; these read DS and YG. Cys75 serves as the catalytic Proton donor/acceptor. Residue 76 to 77 coordinates substrate; the sequence is NT. Catalysis depends on Cys186, which acts as the Proton donor/acceptor. 187–188 lines the substrate pocket; the sequence is TH.

It belongs to the aspartate/glutamate racemases family.

The catalysed reaction is L-glutamate = D-glutamate. Its pathway is cell wall biogenesis; peptidoglycan biosynthesis. Functionally, provides the (R)-glutamate required for cell wall biosynthesis. The polypeptide is Glutamate racemase (Clostridium botulinum (strain Alaska E43 / Type E3)).